Here is a 187-residue protein sequence, read N- to C-terminus: UPF0340 protein stu1894 (187 aa).

It belongs to the UPF0340 family.

The sequence is that of UPF0340 protein stu1894 from Streptococcus thermophilus (strain ATCC BAA-250 / LMG 18311).